Reading from the N-terminus, the 147-residue chain is Protein LOL4 (147 aa).

Putative zinc finger regions lie at residues 4 to 34 (QLICSGCRRVVQYRRGVAGVCCPGCNTLTAV), 44 to 74 (ELICSGCPTLLFYNRGASNIRCPSCNRLNST), and 82 to 112 (HLTCGQCRTTLMHPPGASTVQCATCRYVNHV).

Its subcellular location is the nucleus. In terms of biological role, putative zinc finger that may be involved in programmed cell death and defense response. The chain is Protein LOL4 (LOL4) from Oryza sativa subsp. japonica (Rice).